Here is a 1040-residue protein sequence, read N- to C-terminus: FHF complex subunit HOOK-interacting protein 1A (1040 aa).

3 disordered regions span residues 555-613 (PQQL…PIDP), 653-746 (SEDM…AAHP), and 769-808 (LMEQNYPTPDPLLLTKEEEGKEESKGEKEKEGKKELEDEE). A compositionally biased stretch (basic and acidic residues) spans 653–664 (SEDMKDSQEEAA). The segment covering 677 to 690 (VPINNGPLLSTQPE) has biased composition (polar residues). 2 stretches are compositionally biased toward basic and acidic residues: residues 696–719 (EWNRDNSDPFHSEPKEPKQEREPE) and 783–804 (TKEEEGKEESKGEKEKEGKKEL).

The protein belongs to the FHIP family. As to quaternary structure, may be a component of the FTS/Hook/FHIP complex (FHF complex), composed of AKTIP/FTS, FHIP1B, and one or more members of the Hook family of proteins HOOK1, HOOK2, and HOOK3. May interact directly with AKTIP/FTS.

Its function is as follows. Probable component of the FTS/Hook/FHIP complex (FHF complex). FHF complex promotes the distribution of AP-4 complex to the perinuclear area of the cell. The sequence is that of FHF complex subunit HOOK-interacting protein 1A from Homo sapiens (Human).